Consider the following 635-residue polypeptide: Biosynthetic arginine decarboxylase (635 aa).

The residue at position 103 (Lys103) is an N6-(pyridoxal phosphate)lysine. 283 to 293 is a substrate binding site; that stretch reads FDVGGGLGVDY.

This sequence belongs to the Orn/Lys/Arg decarboxylase class-II family. SpeA subfamily. It depends on Mg(2+) as a cofactor. Pyridoxal 5'-phosphate serves as cofactor.

It catalyses the reaction L-arginine + H(+) = agmatine + CO2. The protein operates within amine and polyamine biosynthesis; agmatine biosynthesis; agmatine from L-arginine: step 1/1. In terms of biological role, catalyzes the biosynthesis of agmatine from arginine. The polypeptide is Biosynthetic arginine decarboxylase (Proteus mirabilis (strain HI4320)).